The following is a 208-amino-acid chain: RNA chaperone ProQ (208 aa).

2 stretches are compositionally biased toward basic and acidic residues: residues 99-115 (AQET…EKNK) and 126-135 (PAKDKPENTA). A disordered region spans residues 99–149 (AQETLKESKAKVAEKNKATNKAAAKKAPAKDKPENTAKAKPKTAKKPAKPK). Basic residues predominate over residues 137-149 (AKPKTAKKPAKPK).

The protein belongs to the ProQ family.

It is found in the cytoplasm. In terms of biological role, RNA chaperone with significant RNA binding, RNA strand exchange and RNA duplexing activities. The chain is RNA chaperone ProQ from Idiomarina loihiensis (strain ATCC BAA-735 / DSM 15497 / L2-TR).